The primary structure comprises 271 residues: Very long chain fatty acid elongase 3 (271 aa).

An N-linked (GlcNAc...) asparagine glycan is attached at asparagine 6. 7 helical membrane passes run 30–50, 67–87, 116–136, 141–161, 165–187, 199–219, and 236–256; these read FLEEYWVSSFLIVVVYLLLIV, PLILWSFFLAIFSILGTLRMW, FWSFLFLLSKVVELGDTAFII, PLIFVHWYHHSTVLLFTSFGY, VPSGGWFMTMNFGVHSVMYTYYT, LPMVITSLQILQMVLGTIFGI, and HFFWSFMLYGTYFILFAHFFH.

Belongs to the ELO family. ELOVL3 subfamily. As to quaternary structure, interacts with TECR. Post-translationally, N-Glycosylated. Expressed in brown adipose tissue and liver. In the skin, strong expressed in the cells of the inner layer of the outer root sheath of the hair follicles and in the sebocytes of the sebaceous glands. Hardly detectable in the epidermis and not at all in fibroblasts.

Its subcellular location is the endoplasmic reticulum membrane. It carries out the reaction a very-long-chain acyl-CoA + malonyl-CoA + H(+) = a very-long-chain 3-oxoacyl-CoA + CO2 + CoA. The enzyme catalyses eicosanoyl-CoA + malonyl-CoA + H(+) = 3-oxodocosanoyl-CoA + CO2 + CoA. The catalysed reaction is hexadecanoyl-CoA + malonyl-CoA + H(+) = 3-oxooctadecanoyl-CoA + CO2 + CoA. It catalyses the reaction octadecanoyl-CoA + malonyl-CoA + H(+) = 3-oxoeicosanoyl-CoA + CO2 + CoA. It carries out the reaction (9Z)-octadecenoyl-CoA + malonyl-CoA + H(+) = 3-oxo-(11Z)-eicosenoyl-CoA + CO2 + CoA. The enzyme catalyses (9Z,12Z)-octadecadienoyl-CoA + malonyl-CoA + H(+) = (11Z,14Z)-3-oxoicosa-11,14-dienoyl-CoA + CO2 + CoA. The catalysed reaction is (9Z,12Z,15Z)-octadecatrienoyl-CoA + malonyl-CoA + H(+) = (11Z,14Z,17Z)-3-oxoeicosatrienoyl-CoA + CO2 + CoA. It catalyses the reaction docosanoyl-CoA + malonyl-CoA + H(+) = 3-oxotetracosanoyl-CoA + CO2 + CoA. It carries out the reaction tetradecanoyl-CoA + malonyl-CoA + H(+) = 3-oxohexadecanoyl-CoA + CO2 + CoA. The protein operates within lipid metabolism; polyunsaturated fatty acid biosynthesis. Its function is as follows. Catalyzes the first and rate-limiting reaction of the four reactions that constitute the long-chain fatty acids elongation cycle. This endoplasmic reticulum-bound enzymatic process allows the addition of 2 carbons to the chain of long- and very long-chain fatty acids (VLCFAs) per cycle. Condensing enzyme that exhibits activity toward saturated and unsaturated acyl-CoA substrates with higher activity toward C18 acyl-CoAs, especially C18:0 acyl-CoAs. May participate in the production of saturated and monounsaturated VLCFAs of different chain lengths that are involved in multiple biological processes as precursors of membrane lipids and lipid mediators. Participates in the formation of certain VLCFA and triglycerides in certain cells of the hair follicles and the sebaceous glands, required for skin barrier function. Critical enzyme for lipid accumulation and metabolic activity in brown adipocytes during the early phase of the tissue recruitment. Plays a role in lipid storage and in resistance to diet-induced obesity. This is Very long chain fatty acid elongase 3 from Mus musculus (Mouse).